A 333-amino-acid chain; its full sequence is Acyl-CoA wax alcohol acyltransferase 2 (333 aa).

3 helical membrane passes run 15-35, 38-58, and 130-150; these read VFAV…VIAV, YLVV…WLAF, and IFPG…MPFL.

It belongs to the diacylglycerol acyltransferase family. As to quaternary structure, monomer. In terms of tissue distribution, highly expressed in skin, where it is primarily restricted to undifferentiated peripheral sebocytes. Also expressed at lower level in other tissues except pancreas.

It is found in the endoplasmic reticulum membrane. The catalysed reaction is a long chain fatty alcohol + a fatty acyl-CoA = a wax ester + CoA. It catalyses the reaction all-trans-retinol + an acyl-CoA = an all-trans-retinyl ester + CoA. The enzyme catalyses an acyl-CoA + a 1,2-diacyl-sn-glycerol = a triacyl-sn-glycerol + CoA. It carries out the reaction 11-cis-retinol + a fatty acyl-CoA = 11-cis-retinyl ester + CoA. The catalysed reaction is 9-cis-retinol + a fatty acyl-CoA = 9-cis-retinyl ester + CoA. It catalyses the reaction 13-cis-retinol + a fatty acyl-CoA = 13-cis-retinyl ester + CoA. The enzyme catalyses a 1-acylglycerol + an acyl-CoA = a 1,2-diacylglycerol + CoA. It carries out the reaction 1-O-alkylglycerol + an acyl-CoA = 1-O-alkyl-3-acylglycerol + CoA. The catalysed reaction is a 2-acylglycerol + an acyl-CoA = a 1,2-diacyl-sn-glycerol + CoA. It catalyses the reaction 2-(9Z-octadecenoyl)-glycerol + hexadecanoyl-CoA = 1-hexadecanoyl-2-(9Z-octadecenoyl)-sn-glycerol + CoA. The enzyme catalyses 1,2-di-(9Z-octadecenoyl)-sn-glycerol + hexadecanoyl-CoA = 1,2-di-(9Z)-octadecenoyl-3-hexadecanoyl-sn-glycerol + CoA. It carries out the reaction hexadecan-1-ol + hexadecanoyl-CoA = hexadecanyl hexadecanoate + CoA. The catalysed reaction is hexadecane-1,2-diol + hexadecanoyl-CoA = 2-hydroxyhexadecyl hexadecanoate + CoA. It catalyses the reaction 9-cis-retinol + hexadecanoyl-CoA = 9-cis-retinyl hexadecanoate + CoA. The enzyme catalyses all-trans-retinol + hexadecanoyl-CoA = all-trans-retinyl hexadecanoate + CoA. It carries out the reaction 1,2-di-(9Z-octadecenoyl)-sn-glycerol + (9Z)-octadecenoyl-CoA = 1,2,3-tri-(9Z-octadecenoyl)-glycerol + CoA. The catalysed reaction is hexadecan-1-ol + (9Z)-octadecenoyl-CoA = hexadecanyl (9Z)-octadecenoate + CoA. It catalyses the reaction (9Z)-hexadecen-1-ol + (9Z)-octadecenoyl-CoA = 1-O-(9Z)-hexadecenyl (9Z)-octadecenoate + CoA. The enzyme catalyses octadecan-1-ol + (9Z)-octadecenoyl-CoA = 1-O-octadecyl (9Z)-octadecenoate + CoA. It carries out the reaction (9Z)-octadecen-1-ol + (9Z)-octadecenoyl-CoA = 1-O-(9Z)-octadecenyl (9Z)-octadecenoate + CoA. The catalysed reaction is hexadecan-1-ol + (9Z)-hexadecenoyl-CoA = 1-O-hexadecyl (9Z)-hexadecenoate + CoA. It catalyses the reaction hexadecan-1-ol + octadecanoyl-CoA = hexadecanyl octadecanoate + CoA. The enzyme catalyses 11-cis-retinol + hexadecanoyl-CoA = 11-cis-retinyl hexadecanoate + CoA. It carries out the reaction 1-O-(9Z-octadecenyl)-glycerol + (9Z)-octadecenoyl-CoA = 1-O-(9Z-octadecyl)-3-(9Z-octadecenoyl)-glycerol + CoA. The catalysed reaction is 1-(9Z-octadecenoyl)-glycerol + (9Z)-octadecenoyl-CoA = 1,2-di-(9Z-octadecenoyl)-glycerol + CoA. It catalyses the reaction 11-cis-retinol + tetradecanoyl-CoA = 11-cis-retinyl tetradecanoate + CoA. The enzyme catalyses 9-cis-retinol + tetradecanoyl-CoA = 9-cis-retinyl tetradecanoate + CoA. It carries out the reaction 13-cis-retinol + tetradecanoyl-CoA = 13-cis-retinyl tetradecanoate + CoA. The catalysed reaction is all-trans-retinol + tetradecanoyl-CoA = all-trans-retinyl tetradecanoate + CoA. It catalyses the reaction tetradecan-1-ol + tetradecanoyl-CoA = tetradecanyl tetradecanoate + CoA. Its activity is regulated as follows. 11-cis retinoids act as allosteric modulators of acyl-CoA retinol O-fatty-acyltransferase (ARAT) activity by suppressing esterification of 9-cis, 13-cis, or all-trans retinols concurrently increasing the enzyme specificity toward 11-cis isomer. Functionally, acyltransferase that catalyzes the formation of ester bonds between fatty alcohols and fatty acyl-CoAs to form wax monoesters. Shows a preference for medium chain acyl-CoAs from C12 to C16 in length and fatty alcohols shorter than C20, as the acyl donors and acceptors, respectively. Also possesses acyl-CoA retinol acyltransferase (ARAT) activity that preferentially esterifies 11-cis-retinol, a chromophore precursor of bleached opsin pigments in cone cells. Shows higher catalytic efficiency toward 11-cis-retinol versus 9-cis-retinol, 13-cis-retinol, and all-trans-retinol substrates. This chain is Acyl-CoA wax alcohol acyltransferase 2 (AWAT2), found in Homo sapiens (Human).